The primary structure comprises 634 residues: Chaperone protein HtpG (634 aa).

An a; substrate-binding region spans residues 1–342 (MTVASHKETL…SNDLPLNISR (342 aa)). The tract at residues 343 to 559 (EILQNNRVID…QHDMSGYLER (217 aa)) is b. The interval 560–634 (LLKEAGQQAP…LNSLLLAMAD (75 aa)) is c.

Belongs to the heat shock protein 90 family. As to quaternary structure, homodimer.

It is found in the cytoplasm. Its function is as follows. Molecular chaperone. Has ATPase activity. This is Chaperone protein HtpG from Nitrosococcus oceani (strain ATCC 19707 / BCRC 17464 / JCM 30415 / NCIMB 11848 / C-107).